A 327-amino-acid chain; its full sequence is Peroxidase 15 (327 aa).

The N-terminal stretch at 1 to 23 is a signal peptide; that stretch reads MASFSPLLAMALAIFIFSSHSNA. The residue at position 24 (Gln-24) is a Pyrrolidone carboxylic acid. 4 cysteine pairs are disulfide-bonded: Cys-34–Cys-115, Cys-67–Cys-72, Cys-121–Cys-323, and Cys-200–Cys-232. The N-linked (GlcNAc...) asparagine glycan is linked to Asn-36. His-65 acts as the Proton acceptor in catalysis. Ca(2+) is bound by residues Asp-66, Val-69, Gly-71, Asp-73, and Ser-75. Residues Asn-81, Asn-96, and Asn-159 are each glycosylated (N-linked (GlcNAc...) asparagine). Substrate is bound at residue Pro-163. Residues Asn-168 and Asn-171 are each glycosylated (N-linked (GlcNAc...) asparagine). Residue His-193 participates in heme b binding. Thr-194 is a binding site for Ca(2+). N-linked (GlcNAc...) asparagine glycans are attached at residues Asn-209 and Asn-221. Ca(2+) contacts are provided by Asp-245, Thr-248, and Asp-253. N-linked (GlcNAc...) asparagine glycosylation is found at Asn-287 and Asn-291.

This sequence belongs to the peroxidase family. Classical plant (class III) peroxidase subfamily. Ca(2+) is required as a cofactor. The cofactor is heme b.

The protein resides in the secreted. It carries out the reaction 2 a phenolic donor + H2O2 = 2 a phenolic radical donor + 2 H2O. Its function is as follows. Removal of H(2)O(2), oxidation of toxic reductants, biosynthesis and degradation of lignin, suberization, auxin catabolism, response to environmental stresses such as wounding, pathogen attack and oxidative stress. These functions might be dependent on each isozyme/isoform in each plant tissue. The chain is Peroxidase 15 from Ipomoea batatas (Sweet potato).